Reading from the N-terminus, the 168-residue chain is MNDLLSRAMRLLSQRDHSEAELRRKLAAQPFMAKARFGTKTPSSSAPLPEEPVDPAVIEQVIAYCYQHNWLDDQRFARSYIGSRSRKGYGAQRIRSELMQKGVDKELTQAALADCEIDWCEQAKQVAQRKFGDQLPTDWKEKAKVQRYLLYRGFFQEEIQSIYRDFAQ.

The protein belongs to the RecX family.

The protein localises to the cytoplasm. Its function is as follows. Modulates RecA activity. The polypeptide is Regulatory protein RecX (Serratia proteamaculans (strain 568)).